A 184-amino-acid chain; its full sequence is Large ribosomal subunit protein uL18 (184 aa).

Belongs to the universal ribosomal protein uL18 family. In terms of assembly, part of the 50S ribosomal subunit. Contacts the 5S and 23S rRNAs.

Functionally, this is one of the proteins that bind and probably mediate the attachment of the 5S RNA into the large ribosomal subunit, where it forms part of the central protuberance. The chain is Large ribosomal subunit protein uL18 (rpl18) from Haloferax volcanii (strain ATCC 29605 / DSM 3757 / JCM 8879 / NBRC 14742 / NCIMB 2012 / VKM B-1768 / DS2) (Halobacterium volcanii).